The sequence spans 394 residues: S-adenosylmethionine synthase 1 (394 aa).

E11 is a Mg(2+) binding site. H17 lines the ATP pocket. E45 lines the K(+) pocket. L-methionine contacts are provided by E58 and Q101. ATP-binding positions include 169–171, 237–240, D248, 254–255, A271, K275, and K279; these read DGK, SGRF, and RK. D248 is a binding site for L-methionine. K279 provides a ligand contact to L-methionine.

It belongs to the AdoMet synthase family. As to quaternary structure, homotetramer. Requires Mn(2+) as cofactor. The cofactor is Mg(2+). Co(2+) serves as cofactor. It depends on K(+) as a cofactor.

It localises to the cytoplasm. The enzyme catalyses L-methionine + ATP + H2O = S-adenosyl-L-methionine + phosphate + diphosphate. Its pathway is amino-acid biosynthesis; S-adenosyl-L-methionine biosynthesis; S-adenosyl-L-methionine from L-methionine: step 1/1. Its function is as follows. Catalyzes the formation of S-adenosylmethionine from methionine and ATP. The reaction comprises two steps that are both catalyzed by the same enzyme: formation of S-adenosylmethionine (AdoMet) and triphosphate, and subsequent hydrolysis of the triphosphate. This chain is S-adenosylmethionine synthase 1 (SAM1), found in Hordeum vulgare (Barley).